A 485-amino-acid chain; its full sequence is NADH-quinone oxidoreductase subunit N (485 aa).

The next 14 helical transmembrane spans lie at 8 to 28 (LIALLPLLIVGLTVVVVMLSI), 35 to 55 (FLNATLSVIGLNAALVSLWFV), 71 to 91 (GFAMLYTGLVLLASLATCTFA), 105 to 125 (FYLLVLIASLGGILLANANHL), 127 to 147 (ALFLGIELISLPLFGLIGYAF), 159 to 179 (YTILSAAASSFLLFGMALVYA), 203 to 223 (LLAGFGLMIVGLGFKLSLVPF), 235 to 255 (PAPVSTFLATASKIAIFGVVM), 271 to 291 (VVLGIIAFASIIFGNLMALSQ), 297 to 317 (LLGYSSISHLGYLLVALIVLQ), 326 to 346 (VGVYLAGYLFSSLGAFGVVSL), 373 to 393 (AAVMTVMMLSLAGIPMTLGFI), 408 to 430 (WWLVAAVVVGSAIGLYYYLRVAV), and 455 to 475 (IVVLISALLVLVLGVWPQPLI).

Belongs to the complex I subunit 2 family. As to quaternary structure, NDH-1 is composed of 13 different subunits. Subunits NuoA, H, J, K, L, M, N constitute the membrane sector of the complex.

It localises to the cell inner membrane. It catalyses the reaction a quinone + NADH + 5 H(+)(in) = a quinol + NAD(+) + 4 H(+)(out). NDH-1 shuttles electrons from NADH, via FMN and iron-sulfur (Fe-S) centers, to quinones in the respiratory chain. The immediate electron acceptor for the enzyme in this species is believed to be ubiquinone. Couples the redox reaction to proton translocation (for every two electrons transferred, four hydrogen ions are translocated across the cytoplasmic membrane), and thus conserves the redox energy in a proton gradient. The protein is NADH-quinone oxidoreductase subunit N of Salmonella choleraesuis (strain SC-B67).